The primary structure comprises 107 residues: Iron-sulfur cluster assembly protein CyaY (107 aa).

It belongs to the frataxin family.

Involved in iron-sulfur (Fe-S) cluster assembly. May act as a regulator of Fe-S biogenesis. This chain is Iron-sulfur cluster assembly protein CyaY, found in Neisseria meningitidis serogroup C / serotype 2a (strain ATCC 700532 / DSM 15464 / FAM18).